Reading from the N-terminus, the 204-residue chain is uncharacterized protein (204 aa).

This is an uncharacterized protein from Methanocaldococcus jannaschii (strain ATCC 43067 / DSM 2661 / JAL-1 / JCM 10045 / NBRC 100440) (Methanococcus jannaschii).